The primary structure comprises 481 residues: Small ribosomal subunit protein bS1 (481 aa).

4 S1 motif domains span residues 36–105, 123–188, 209–277, and 294–363; these read GDIV…LSKK, DEAV…LSRR, GAIR…LSLK, and GQIV…LSLK. A disordered region spans residues 437 to 465; sequence ATEEAGHGSSEQPPASSTPSAKATGGSLA. Residues 445 to 457 are compositionally biased toward polar residues; that stretch reads SSEQPPASSTPSA.

Belongs to the bacterial ribosomal protein bS1 family.

Its function is as follows. Binds mRNA; thus facilitating recognition of the initiation point. It is needed to translate mRNA with a short Shine-Dalgarno (SD) purine-rich sequence. The protein is Small ribosomal subunit protein bS1 (rpsA) of Mycobacterium leprae (strain TN).